The sequence spans 66 residues: UPF0370 protein YpfN (66 aa).

A helical transmembrane segment spans residues L4–I24. The interval K39 to K66 is disordered. Positions L42–K66 are enriched in basic and acidic residues.

The protein belongs to the UPF0370 family.

It localises to the cell membrane. The polypeptide is UPF0370 protein YpfN (Salmonella paratyphi B (strain ATCC BAA-1250 / SPB7)).